Here is a 1011-residue protein sequence, read N- to C-terminus: Probable calcium-transporting ATPase (1011 aa).

The Cytoplasmic portion of the chain corresponds to 1 to 65; the sequence is MLPENLPTDP…WKLVLAQFED (65 aa). Residues 66 to 84 traverse the membrane as a helical segment; it reads TLVRILLLAATVSFAMAVV. Residues 85-90 are Extracellular-facing; it reads ENNAAD. The chain crosses the membrane as a helical span at residues 91-110; sequence FVEPFIILLILILNATVGVW. Topologically, residues 111-258 are cytoplasmic; the sequence is QENRAEGAIE…QVKLDEFGVL (148 aa). The helical transmembrane segment at 259–278 threads the bilayer; the sequence is LSKVIGYICLVVFAVNLVRW. Over 279 to 303 the chain is Extracellular; the sequence is YATHKPTKNETFFTRYIQPSVHCLK. Residues 304–321 traverse the membrane as a helical segment; it reads VAVALAVAAIPEGLPAVV. Over 322 to 770 the chain is Cytoplasmic; it reads TTCLALGTRR…RYLISSNIGE (449 aa). The active-site 4-aspartylphosphate intermediate is the D357. Position 514 (K514) interacts with ATP. Residues 771–794 traverse the membrane as a helical segment; the sequence is VVCILVTGLFGLPEALSPVQLLWV. Residues 795–835 are Extracellular-facing; sequence NLVTDGLPATALGFNAPDRDIMEQRPRRMEEPIVNGWLFMR. The chain crosses the membrane as a helical span at residues 836–856; it reads YMVIGVYVGLATVGGFLWWFL. Over 857–885 the chain is Cytoplasmic; that stretch reads RHGFSWHDLTTYTACSDMTNGTCLLLANP. The helical transmembrane segment at 886–905 threads the bilayer; the sequence is QTARAIALSILVVVEMLNAL. Topologically, residues 906–922 are extracellular; sequence NALSENASLIVSRPSSN. A helical membrane pass occupies residues 923–942; it reads VWLLFAIFSSLSLHLIIMYV. The Cytoplasmic portion of the chain corresponds to 943–1011; the sequence is PFFAKLFNIV…MEKAQEKKKD (69 aa).

This sequence belongs to the cation transport ATPase (P-type) (TC 3.A.3) family.

It is found in the flagellar pocket. Its subcellular location is the cell membrane. It catalyses the reaction Ca(2+)(in) + ATP + H2O = Ca(2+)(out) + ADP + phosphate + H(+). Its function is as follows. This magnesium-dependent enzyme catalyzes the hydrolysis of ATP coupled with the transport of the calcium. In Trypanosoma brucei brucei, this protein is Probable calcium-transporting ATPase (TBA1).